The primary structure comprises 477 residues: Acetolactate synthase small subunit 2, chloroplastic (477 aa).

Residues M1 to A53 constitute a chloroplast transit peptide. 2 consecutive ACT domains span residues T78–K150 and T309–H383. 10 residues coordinate L-valine: D85, I89, I90, N103, I104, N316, V320, L321, N334, and I335.

The protein belongs to the acetolactate synthase small subunit family. As to quaternary structure, the acetolactate synthase complex contains 4 homodimers of the large catalytic subunits, and 1 homotetramer of the small regulatory subunits. In terms of tissue distribution, expressed in roots in the vascular tissuem in cells around the quiescent center, in floral organs at the tips of young siliques and in the joint region between the silique and the pedicel. Barely detectable in mature leaves or siliques.

The protein resides in the plastid. It localises to the chloroplast. It is found in the peroxisome. The protein operates within amino-acid biosynthesis; L-isoleucine biosynthesis; L-isoleucine from 2-oxobutanoate: step 1/4. Its pathway is amino-acid biosynthesis; L-valine biosynthesis; L-valine from pyruvate: step 1/4. Its function is as follows. Regulatory subunit of acetohydroxy-acid synthase. Involved in the feed-back inhibition by branched-chain amino acids but not in herbicide tolerance. May play a role in valine and isoleucine-mediated feedback inhibition in roots. In vitro, inhibited by valine, but not leucine or isoleucine. Required for reproductive development and sodium homeostasis. The sequence is that of Acetolactate synthase small subunit 2, chloroplastic from Arabidopsis thaliana (Mouse-ear cress).